Here is a 218-residue protein sequence, read N- to C-terminus: Ras-related protein R-Ras (218 aa).

The tract at residues 1-30 is disordered; the sequence is MSSGAASGTGRGRPRGGGPGPGDPPPSETH. Gly residues predominate over residues 7-20; that stretch reads SGTGRGRPRGGGPG. Position 36–44 (36–44) interacts with GTP; the sequence is GGGGVGKSA. An Effector region motif is present at residues 58–66; that stretch reads YDPTIEDSY. GTP-binding positions include 83-87, 142-145, and 172-174; these read DTAGQ, NKAD, and SAK. Cysteine 215 carries the post-translational modification Cysteine methyl ester. Residue cysteine 215 is the site of S-geranylgeranyl cysteine attachment. A propeptide spans 216–218 (removed in mature form); that stretch reads VLL.

Belongs to the small GTPase superfamily. Ras family. Interacts with PLCE1. Interacts (active GTP-bound form preferentially) with RGS14. Interacts with OSBPL3. Interacts with ZDHHC19. Post-translationally, S-palmitoylated by ZDHHC19, leading to increased association with membranes and with rafts/caveolae as well as enhanced cell viability.

It localises to the cell membrane. It catalyses the reaction GTP + H2O = GDP + phosphate + H(+). In terms of biological role, GTP-binding protein with GTPase activity, likely involved in the regulation of MAPK signaling pathway and thereby controlling multiple cellular processes. Regulates the organization of the actin cytoskeleton. With OSPBL3, modulates integrin beta-1 (ITGB1) activity. The protein is Ras-related protein R-Ras (RRAS) of Homo sapiens (Human).